The following is a 398-amino-acid chain: S-adenosylmethionine synthase (398 aa).

H15 is an ATP binding site. Position 17 (D17) interacts with Mg(2+). E43 is a binding site for K(+). 2 residues coordinate L-methionine: E56 and Q99. A flexible loop region spans residues 99 to 109 (QSPDIAQGVDT). ATP-binding positions include 175 to 177 (DGK), 243 to 244 (RF), D252, 258 to 259 (RK), A275, and K279. An L-methionine-binding site is contributed by D252. L-methionine is bound at residue K283.

Belongs to the AdoMet synthase family. Homotetramer; dimer of dimers. Mg(2+) serves as cofactor. K(+) is required as a cofactor.

The protein resides in the cytoplasm. It catalyses the reaction L-methionine + ATP + H2O = S-adenosyl-L-methionine + phosphate + diphosphate. It participates in amino-acid biosynthesis; S-adenosyl-L-methionine biosynthesis; S-adenosyl-L-methionine from L-methionine: step 1/1. Functionally, catalyzes the formation of S-adenosylmethionine (AdoMet) from methionine and ATP. The overall synthetic reaction is composed of two sequential steps, AdoMet formation and the subsequent tripolyphosphate hydrolysis which occurs prior to release of AdoMet from the enzyme. The chain is S-adenosylmethionine synthase from Parafrankia sp. (strain EAN1pec).